A 165-amino-acid chain; its full sequence is SsrA-binding protein (165 aa).

Residues lysine 141 to tyrosine 165 are disordered. The span at aspartate 144–lysine 159 shows a compositional bias: basic and acidic residues.

This sequence belongs to the SmpB family.

It localises to the cytoplasm. Required for rescue of stalled ribosomes mediated by trans-translation. Binds to transfer-messenger RNA (tmRNA), required for stable association of tmRNA with ribosomes. tmRNA and SmpB together mimic tRNA shape, replacing the anticodon stem-loop with SmpB. tmRNA is encoded by the ssrA gene; the 2 termini fold to resemble tRNA(Ala) and it encodes a 'tag peptide', a short internal open reading frame. During trans-translation Ala-aminoacylated tmRNA acts like a tRNA, entering the A-site of stalled ribosomes, displacing the stalled mRNA. The ribosome then switches to translate the ORF on the tmRNA; the nascent peptide is terminated with the 'tag peptide' encoded by the tmRNA and targeted for degradation. The ribosome is freed to recommence translation, which seems to be the essential function of trans-translation. The protein is SsrA-binding protein of Prochlorococcus marinus (strain SARG / CCMP1375 / SS120).